Reading from the N-terminus, the 158-residue chain is MAEQVTKSVLFVCLGNICRSPIAEAVFRKLVTDQNVSDNWVIDSSAVSDWNVGRSPDPRAVSCLRHHGINTAHKARQITKEDFATFDYILCMDESNLRDLNRKGNQVKNCRAKIELLGSYDPQKQLIIEDPYYGNDSDFEAVYQQCVRCCRAFLEKVR.

At A2 the chain carries N-acetylalanine. The active-site Nucleophile is the C13. Residue R19 is part of the active site. Residue D130 is the Proton donor of the active site. Y132 and Y133 each carry phosphotyrosine.

Belongs to the low molecular weight phosphotyrosine protein phosphatase family. Interacts with EPHA2; dephosphorylates EPHA2. Interacts with EPHB1. Interacts with the SH3 domain of SPTAN1. Phosphorylated by LCK. Phosphorylation at Tyr-132 increases its phosphatase activity.

Its subcellular location is the cytoplasm. The catalysed reaction is O-phospho-L-tyrosyl-[protein] + H2O = L-tyrosyl-[protein] + phosphate. The enzyme catalyses a phosphate monoester + H2O = an alcohol + phosphate. With respect to regulation, inhibited by sulfhydryl reagents. In terms of biological role, acts on tyrosine phosphorylated proteins, low-MW aryl phosphates and natural and synthetic acyl phosphates with differences in substrate specificity between isoform 1 and isoform 2. In Sus scrofa (Pig), this protein is Low molecular weight phosphotyrosine protein phosphatase (ACP1).